Consider the following 274-residue polypeptide: Dermonecrotic toxin SdSicTox-betaIIB2ii (274 aa).

Residue H5 is part of the active site. Mg(2+)-binding residues include E25 and D27. The Nucleophile role is filled by H41. 2 disulfides stabilise this stretch: C45-C51 and C47-C190. D85 provides a ligand contact to Mg(2+).

This sequence belongs to the arthropod phospholipase D family. Class II subfamily. It depends on Mg(2+) as a cofactor. As to expression, expressed by the venom gland.

It is found in the secreted. It catalyses the reaction an N-(acyl)-sphingosylphosphocholine = an N-(acyl)-sphingosyl-1,3-cyclic phosphate + choline. The enzyme catalyses an N-(acyl)-sphingosylphosphoethanolamine = an N-(acyl)-sphingosyl-1,3-cyclic phosphate + ethanolamine. It carries out the reaction a 1-acyl-sn-glycero-3-phosphocholine = a 1-acyl-sn-glycero-2,3-cyclic phosphate + choline. The catalysed reaction is a 1-acyl-sn-glycero-3-phosphoethanolamine = a 1-acyl-sn-glycero-2,3-cyclic phosphate + ethanolamine. Functionally, dermonecrotic toxins cleave the phosphodiester linkage between the phosphate and headgroup of certain phospholipids (sphingolipid and lysolipid substrates), forming an alcohol (often choline) and a cyclic phosphate. This toxin acts on sphingomyelin (SM). It may also act on ceramide phosphoethanolamine (CPE), lysophosphatidylcholine (LPC) and lysophosphatidylethanolamine (LPE), but not on lysophosphatidylserine (LPS), and lysophosphatidylglycerol (LPG). It acts by transphosphatidylation, releasing exclusively cyclic phosphate products as second products. Induces dermonecrosis, hemolysis, increased vascular permeability, edema, inflammatory response, and platelet aggregation. In Sicarius cf. damarensis (strain GJB-2008) (Six-eyed sand spider), this protein is Dermonecrotic toxin SdSicTox-betaIIB2ii.